We begin with the raw amino-acid sequence, 721 residues long: Putative cullin-like protein 1 (721 aa).

Residues 651-713 (DRRYAIDAAL…RDYLERDTEN (63 aa)) enclose the Cullin neddylation domain.

Belongs to the cullin family.

In Arabidopsis thaliana (Mouse-ear cress), this protein is Putative cullin-like protein 1.